Consider the following 36-residue polypeptide: Photosystem I reaction center subunit VIII (36 aa).

The chain crosses the membrane as a helical span at residues Ile-9–Tyr-29.

The protein belongs to the PsaI family.

Its subcellular location is the plastid. It localises to the chloroplast thylakoid membrane. May help in the organization of the PsaL subunit. The polypeptide is Photosystem I reaction center subunit VIII (Phalaenopsis aphrodite subsp. formosana (Moth orchid)).